Here is a 72-residue protein sequence, read N- to C-terminus: Prokaryotic ubiquitin-like protein Pup (72 aa).

Positions 1-10 (MATRDSGGGQ) are enriched in gly residues. The interval 1 to 41 (MATRDSGGGQQRADRRAEEIDDVATEDTSASDLKERHEKLS) is disordered. The stretch at 27-61 (DTSASDLKERHEKLSEDVDSLLDEIDDVLEENAEE) forms a coiled coil. The segment at 28–66 (TSASDLKERHEKLSEDVDSLLDEIDDVLEENAEEFVKGY) is ARC ATPase binding. Residues 32–41 (DLKERHEKLS) show a composition bias toward basic and acidic residues. A Deamidated glutamine modification is found at Q72. Q72 participates in a covalent cross-link: Isoglutamyl lysine isopeptide (Gln-Lys) (interchain with K-? in acceptor proteins).

This sequence belongs to the prokaryotic ubiquitin-like protein family. Strongly interacts with the proteasome-associated ATPase ARC through a hydrophobic interface; the interacting region of Pup lies in its C-terminal half. There is one Pup binding site per ARC hexamer ring. Post-translationally, is modified by deamidation of its C-terminal glutamine to glutamate by the deamidase Dop, a prerequisite to the subsequent pupylation process.

The protein operates within protein degradation; proteasomal Pup-dependent pathway. In terms of biological role, protein modifier that is covalently attached to lysine residues of substrate proteins, thereby targeting them for proteasomal degradation. The tagging system is termed pupylation. The polypeptide is Prokaryotic ubiquitin-like protein Pup (Frankia casuarinae (strain DSM 45818 / CECT 9043 / HFP020203 / CcI3)).